An 87-amino-acid chain; its full sequence is Protein WFDC11 (87 aa).

The N-terminal stretch at 1-25 (MVSLMKLWIPMLMTFFCTVLLSVLG) is a signal peptide.

The protein resides in the secreted. The sequence is that of Protein WFDC11 (WFDC11) from Homo sapiens (Human).